We begin with the raw amino-acid sequence, 360 residues long: Ribosomal RNA large subunit methyltransferase M (360 aa).

S-adenosyl-L-methionine-binding positions include serine 190, 223–226 (CPGG), aspartate 242, aspartate 262, and aspartate 280. Lysine 309 acts as the Proton acceptor in catalysis.

The protein belongs to the class I-like SAM-binding methyltransferase superfamily. RNA methyltransferase RlmE family. RlmM subfamily. In terms of assembly, monomer.

Its subcellular location is the cytoplasm. The catalysed reaction is cytidine(2498) in 23S rRNA + S-adenosyl-L-methionine = 2'-O-methylcytidine(2498) in 23S rRNA + S-adenosyl-L-homocysteine + H(+). Catalyzes the 2'-O-methylation at nucleotide C2498 in 23S rRNA. The sequence is that of Ribosomal RNA large subunit methyltransferase M from Haemophilus ducreyi (strain 35000HP / ATCC 700724).